We begin with the raw amino-acid sequence, 181 residues long: Protein CENTRORADIALIS (181 aa).

Belongs to the phosphatidylethanolamine-binding protein family. May form homodimers in solution.

It localises to the cytoplasm. In terms of biological role, expression of CEN leads to a morphological switch between shoot growth and the development of flower structures (inflorescence). May form complexes with phosphorylated ligands by interfering with kinases and their effectors. This chain is Protein CENTRORADIALIS (CEN), found in Antirrhinum majus (Garden snapdragon).